The sequence spans 385 residues: Centrosomal protein of 44 kDa (385 aa).

The segment at 11 to 191 (RKLEQRLRTL…TKCYKSALLE (181 aa)) is binds with microtubules and centrioles. Residues 194 to 204 (EEEEPTSDCEE) are compositionally biased toward acidic residues. Residues 194-224 (EEEEPTSDCEEDSHLQREMGSPFETAEETPN) form a disordered region. Coiled coils occupy residues 224–263 (NSEQ…KGKI) and 353–379 (TEES…ELLK).

In terms of assembly, binds to centriolar microtubules.

It is found in the cytoplasm. The protein resides in the cytoskeleton. It localises to the microtubule organizing center. Its subcellular location is the centrosome. The protein localises to the centriole. It is found in the spindle pole. The protein resides in the midbody. Functionally, centriole-enriched microtubule-binding protein involved in centriole biogenesis. In collaboration with CEP295 and POC1B, is required for the centriole-to-centrosome conversion by ensuring the formation of bona fide centriole wall. Functions as a linker component that maintains centrosome cohesion. Associates with CROCC and regulates its stability and localization to the centrosome. This Xenopus tropicalis (Western clawed frog) protein is Centrosomal protein of 44 kDa (cep44).